Consider the following 123-residue polypeptide: MALLKISVVVPEGEVYTGEVKSVVLPGVEGEFGVLYGHSNMITLLQAGVIEIETENQKEHIAINWGYAEVTNERVDILADGAVFIKKESDDRDDAISRAKKLLEDASSDRLAVSSVLAKIESL.

The protein belongs to the ATPase epsilon chain family. As to quaternary structure, F-type ATPases have 2 components, CF(1) - the catalytic core - and CF(0) - the membrane proton channel. CF(1) has five subunits: alpha(3), beta(3), gamma(1), delta(1), epsilon(1). CF(0) has three main subunits: a, b and c.

Its subcellular location is the cell inner membrane. Produces ATP from ADP in the presence of a proton gradient across the membrane. The chain is ATP synthase epsilon chain (atpC) from Helicobacter pylori (strain ATCC 700392 / 26695) (Campylobacter pylori).